A 511-amino-acid polypeptide reads, in one-letter code: 2,3-bisphosphoglycerate-independent phosphoglycerate mutase (511 aa).

Aspartate 12 and serine 62 together coordinate Mn(2+). The active-site Phosphoserine intermediate is serine 62. Residues histidine 123, 154–155 (RD), arginine 181, arginine 187, 252–255 (RPDR), and lysine 335 each bind substrate. Residues aspartate 402, histidine 406, aspartate 444, histidine 445, and histidine 462 each coordinate Mn(2+).

This sequence belongs to the BPG-independent phosphoglycerate mutase family. In terms of assembly, monomer. Mn(2+) serves as cofactor.

The catalysed reaction is (2R)-2-phosphoglycerate = (2R)-3-phosphoglycerate. The protein operates within carbohydrate degradation; glycolysis; pyruvate from D-glyceraldehyde 3-phosphate: step 3/5. Functionally, catalyzes the interconversion of 2-phosphoglycerate and 3-phosphoglycerate. The polypeptide is 2,3-bisphosphoglycerate-independent phosphoglycerate mutase (Acholeplasma laidlawii (strain PG-8A)).